The following is a 364-amino-acid chain: DNA polymerase IV (364 aa).

In terms of domain architecture, UmuC spans 14 to 198; sequence IIHIDMDAFF…LPVEKFHGVG (185 aa). Mg(2+) is bound by residues Asp-18 and Asp-116. Residue Glu-117 is part of the active site.

This sequence belongs to the DNA polymerase type-Y family. Monomer. It depends on Mg(2+) as a cofactor.

The protein localises to the cytoplasm. The enzyme catalyses DNA(n) + a 2'-deoxyribonucleoside 5'-triphosphate = DNA(n+1) + diphosphate. Its function is as follows. Poorly processive, error-prone DNA polymerase involved in untargeted mutagenesis. Copies undamaged DNA at stalled replication forks, which arise in vivo from mismatched or misaligned primer ends. These misaligned primers can be extended by PolIV. Exhibits no 3'-5' exonuclease (proofreading) activity. May be involved in translesional synthesis, in conjunction with the beta clamp from PolIII. This is DNA polymerase IV from Lactococcus lactis subsp. cremoris (strain SK11).